Here is a 228-residue protein sequence, read N- to C-terminus: MPKQKAPRKQLKSYKLKHINKSIQEGDAVLMRSSEPGKPSYVARVEAIETDARGSHAKVRVRWYYRPEESIGGRRQFHGAKEVFLSDHFDFQSADTIEGKCKVHSFSSYTKLDSVGNDDFFCRFEYNSTTGAFDPDRVTVFCKCEMPYNPDDLMVQCEECSEWFHPSCIGTTIEEAKKPDNFYCEECSPQQQNLHNSNSTSNNRDAKVNGKRSLEVTKSKNKHTKRPG.

In terms of domain architecture, BAH spans 21-137; the sequence is KSIQEGDAVL…STTGAFDPDR (117 aa). The PHD-type zinc finger occupies 139 to 190; sequence TVFCKCEMPYNPDDLMVQCEECSEWFHPSCIGTTIEEAKKPDNFYCEECSPQ. Positions 191–203 are enriched in polar residues; it reads QQNLHNSNSTSNN. The tract at residues 191–228 is disordered; the sequence is QQNLHNSNSTSNNRDAKVNGKRSLEVTKSKNKHTKRPG. Basic and acidic residues predominate over residues 204 to 218; sequence RDAKVNGKRSLEVTK. Positions 210-217 match the Nuclear localization signal motif; that stretch reads GKRSLEVT. Basic residues predominate over residues 219–228; that stretch reads SKNKHTKRPG.

It belongs to the SHL1/EBS protein family. In terms of assembly, recognizes di- and trimethylated histone H3 at lysine 4. Interacts with HDA6. Interacts with DEK3. Expressed ubiquitously. Mostly expressed in roots, stems, leaves and flowers, and, to a lower extent, in siliques.

Its subcellular location is the nucleus. In terms of biological role, chromatin remodeling factor that binds to methylated histone (e.g. H3K4me2/3) to prevent their acetylation (e.g. H3K9K14Ac), likely by recruiting histone deacetylase (HDAC) complexes, and thus regulate the transcription of target genes. Required during development and for fertility, probably by modulating developmental gene expression. Promotes development speed, but at fitness cost. Involved in the chromatin-mediated repression of floral initiation and controls genes regulating flowering. Negatively regulates the expression of the floral integrator SOC1, by preventing high levels of H3 acetylation, thus maintaining an inactive chromatin conformation. In Arabidopsis thaliana (Mouse-ear cress), this protein is Chromatin remodeling protein SHL.